The chain runs to 404 residues: Subtilisin-like protease 3 (404 aa).

The N-terminal stretch at 1–20 (MLFSKSLVALVACFLPLIVS) is a signal peptide. Positions 21 to 114 (ATELKLRNAA…VDKDVKVSAY (94 aa)) are excised as a propeptide. The region spanning 38–112 (SYIVVYKDID…AYVDKDVKVS (75 aa)) is the Inhibitor I9 domain. Positions 123-404 (PWGLDRISHR…DNLAYNDDGY (282 aa)) constitute a Peptidase S8 domain. A glycan (N-linked (GlcNAc...) asparagine) is linked at Asn133. Catalysis depends on charge relay system residues Asp158 and His190. Residues Asn243, Asn251, Asn286, Asn307, and Asn340 are each glycosylated (N-linked (GlcNAc...) asparagine). Catalysis depends on Ser347, which acts as the Charge relay system. The N-linked (GlcNAc...) asparagine glycan is linked to Asn366.

Belongs to the peptidase S8 family.

The protein localises to the secreted. Functionally, secreted subtilisin-like serine endopeptidase. Mediates the degradation of collagen, the major structural protein in the mammalian host. Degrades the nonhelical regions of collagen that function in the cross-linking of the helical components. May function as virulence factor involved in epidermal wing necrosis observed in white nose syndrome (WNS) in bats. The protein is Subtilisin-like protease 3 of Pseudogymnoascus destructans (strain ATCC MYA-4855 / 20631-21) (Bat white-nose syndrome fungus).